A 348-amino-acid chain; its full sequence is Quinolinate synthase (348 aa).

Residues His-47 and Ser-68 each contribute to the iminosuccinate site. Cys-113 lines the [4Fe-4S] cluster pocket. Iminosuccinate contacts are provided by residues 139–141 (YAN) and Ser-156. Cys-200 contacts [4Fe-4S] cluster. Residues 226-228 (HPE) and Thr-243 contribute to the iminosuccinate site. Cys-297 contributes to the [4Fe-4S] cluster binding site.

Belongs to the quinolinate synthase family. Type 1 subfamily. The cofactor is [4Fe-4S] cluster.

It is found in the cytoplasm. It carries out the reaction iminosuccinate + dihydroxyacetone phosphate = quinolinate + phosphate + 2 H2O + H(+). The protein operates within cofactor biosynthesis; NAD(+) biosynthesis; quinolinate from iminoaspartate: step 1/1. Catalyzes the condensation of iminoaspartate with dihydroxyacetone phosphate to form quinolinate. The chain is Quinolinate synthase from Sodalis glossinidius (strain morsitans).